The sequence spans 832 residues: Translation initiation factor IF-2 (832 aa).

The tract at residues 1 to 249 (MSDDNDKPRT…GGGSSAPREK (249 aa)) is disordered. The span at 53-71 (TPAPAPEPAPEPAPAPAPA) shows a compositional bias: pro residues. Residues 89–144 (PQERVARLQREAEEERLKLAEDARKRDDQKAKQNADDEKKRQEENKKAEEEAEKQA) show a composition bias toward basic and acidic residues. A compositionally biased stretch (low complexity) spans 145 to 156 (AAEAEAAAAAEA). Residues 180–200 (PEPKRPEKKKEEKKPARGGAK) are compositionally biased toward basic and acidic residues. Positions 333–503 (PRPPVVTIMG…ELQAELLELK (171 aa)) constitute a tr-type G domain. The interval 342–349 (GHVDHGKT) is G1. GTP is bound at residue 342–349 (GHVDHGKT). A G2 region spans residues 367 to 371 (GITQH). The interval 389–392 (DTPG) is G3. GTP is bound by residues 389–393 (DTPGH) and 443–446 (NKCD). The segment at 443-446 (NKCD) is G4. Positions 479–481 (SAT) are G5.

The protein belongs to the TRAFAC class translation factor GTPase superfamily. Classic translation factor GTPase family. IF-2 subfamily.

It is found in the cytoplasm. In terms of biological role, one of the essential components for the initiation of protein synthesis. Protects formylmethionyl-tRNA from spontaneous hydrolysis and promotes its binding to the 30S ribosomal subunits. Also involved in the hydrolysis of GTP during the formation of the 70S ribosomal complex. This chain is Translation initiation factor IF-2, found in Erythrobacter litoralis (strain HTCC2594).